A 563-amino-acid chain; its full sequence is Dihydroxy-acid dehydratase (563 aa).

A Mg(2+)-binding site is contributed by aspartate 79. Residue cysteine 120 coordinates [2Fe-2S] cluster. Residues aspartate 121 and lysine 122 each contribute to the Mg(2+) site. Lysine 122 bears the N6-carboxylysine mark. Residue cysteine 193 coordinates [2Fe-2S] cluster. Residue glutamate 451 participates in Mg(2+) binding. Serine 477 (proton acceptor) is an active-site residue.

This sequence belongs to the IlvD/Edd family. As to quaternary structure, homodimer. The cofactor is [2Fe-2S] cluster. Mg(2+) is required as a cofactor.

It carries out the reaction (2R)-2,3-dihydroxy-3-methylbutanoate = 3-methyl-2-oxobutanoate + H2O. The catalysed reaction is (2R,3R)-2,3-dihydroxy-3-methylpentanoate = (S)-3-methyl-2-oxopentanoate + H2O. It functions in the pathway amino-acid biosynthesis; L-isoleucine biosynthesis; L-isoleucine from 2-oxobutanoate: step 3/4. The protein operates within amino-acid biosynthesis; L-valine biosynthesis; L-valine from pyruvate: step 3/4. Functionally, functions in the biosynthesis of branched-chain amino acids. Catalyzes the dehydration of (2R,3R)-2,3-dihydroxy-3-methylpentanoate (2,3-dihydroxy-3-methylvalerate) into 2-oxo-3-methylpentanoate (2-oxo-3-methylvalerate) and of (2R)-2,3-dihydroxy-3-methylbutanoate (2,3-dihydroxyisovalerate) into 2-oxo-3-methylbutanoate (2-oxoisovalerate), the penultimate precursor to L-isoleucine and L-valine, respectively. This is Dihydroxy-acid dehydratase from Sulfurovum sp. (strain NBC37-1).